Consider the following 293-residue polypeptide: MATTREIRRRIRSIKNTAQITKAMQMVAASKMRKAQQRAIEGRPYHSLFQEIVHSLIPQAGQLIHPLLEARAIQKEIVFVIGTDKGLCGPLNTNLLREIYKHHSPNHLYVSMGKKVRNYLSGLKGSRGENLLLADFELKDNLTFREAKRIGHFLIEKYLHKEIDAISIAYSHFVNPLIQKPIYRRIAPISKVELVKKEKAESPPAESVLPFNFEPSAEELLESLLPFYIHWEIYQAILDNLASEHSARMVAMKSATENAKSLLQDLSLEYNKARQESITKEILEISTAQYAMG.

This sequence belongs to the ATPase gamma chain family. In terms of assembly, F-type ATPases have 2 components, CF(1) - the catalytic core - and CF(0) - the membrane proton channel. CF(1) has five subunits: alpha(3), beta(3), gamma(1), delta(1), epsilon(1). CF(0) has three main subunits: a, b and c.

The protein localises to the cell membrane. Its function is as follows. Produces ATP from ADP in the presence of a proton gradient across the membrane. The gamma chain is believed to be important in regulating ATPase activity and the flow of protons through the CF(0) complex. The protein is ATP synthase gamma chain of Methylacidiphilum infernorum (isolate V4) (Methylokorus infernorum (strain V4)).